The primary structure comprises 321 residues: Autophagy protein 5 (321 aa).

Lys157 participates in a covalent cross-link: Glycyl lysine isopeptide (Lys-Gly) (interchain with G-Cter in atg12).

It belongs to the ATG5 family. As to quaternary structure, conjugated with atg12. Conjugated to atg12; which is essential for autophagy.

It localises to the preautophagosomal structure membrane. Its function is as follows. Involved in cytoplasm to vacuole transport (Cvt) and autophagic vesicle formation. Autophagy is essential for maintenance of amino acid levels and protein synthesis under nitrogen starvation. Required for selective autophagic degradation of the nucleus (nucleophagy). Also required for mitophagy, which eliminates defective or superfluous mitochondria in order to fulfill cellular energy requirements and prevent excess ROS production. Conjugation with atg12, through a ubiquitin-like conjugating system involving atg7 as an E1-like activating enzyme and atg10 as an E2-like conjugating enzyme, is essential for its function. The atg12-atg5 conjugate acts as an E3-like enzyme which is required for lipidation of atg8 and atg8 association to the vesicle membranes. The protein is Autophagy protein 5 (atg5) of Aspergillus clavatus (strain ATCC 1007 / CBS 513.65 / DSM 816 / NCTC 3887 / NRRL 1 / QM 1276 / 107).